The primary structure comprises 87 residues: Small ribosomal subunit protein uS15c (87 aa).

The interval 1 to 20 (MNQNLSIRKRNKLKQDSGSP) is disordered.

The protein belongs to the universal ribosomal protein uS15 family. As to quaternary structure, part of the 30S ribosomal subunit.

The protein localises to the plastid. The protein resides in the chloroplast. This is Small ribosomal subunit protein uS15c (rps15) from Zygnema circumcarinatum (Green alga).